Here is a 301-residue protein sequence, read N- to C-terminus: Thiosulfate sulfurtransferase (301 aa).

Rhodanese domains lie at 31–138 (GSPG…DTSY) and 171–289 (QSGG…MPIE). The Cysteine persulfide intermediate role is filled by C248. R253 lines the substrate pocket.

It carries out the reaction thiosulfate + hydrogen cyanide = thiocyanate + sulfite + 2 H(+). In Corynebacterium glutamicum (strain ATCC 13032 / DSM 20300 / JCM 1318 / BCRC 11384 / CCUG 27702 / LMG 3730 / NBRC 12168 / NCIMB 10025 / NRRL B-2784 / 534), this protein is Thiosulfate sulfurtransferase (thtR).